The sequence spans 53 residues: Large ribosomal subunit protein bL32 (53 aa).

A disordered region spans residues 1–27; it reads MAVQQNKKSRSRRDMRRSHDALTTAAV. Residues 7–16 are compositionally biased toward basic residues; the sequence is KKSRSRRDMR.

The protein belongs to the bacterial ribosomal protein bL32 family.

In Glaesserella parasuis serovar 5 (strain SH0165) (Haemophilus parasuis), this protein is Large ribosomal subunit protein bL32.